The primary structure comprises 180 residues: UPF0227 protein VV2369 (180 aa).

Belongs to the UPF0227 family.

The polypeptide is UPF0227 protein VV2369 (Vibrio vulnificus (strain YJ016)).